The following is a 134-amino-acid chain: Phosphoribosyl-AMP cyclohydrolase (134 aa).

D80 is a binding site for Mg(2+). Residue C81 participates in Zn(2+) binding. Positions 82 and 84 each coordinate Mg(2+). Zn(2+)-binding residues include C98 and C105.

The protein belongs to the PRA-CH family. In terms of assembly, homodimer. It depends on Mg(2+) as a cofactor. Requires Zn(2+) as cofactor.

The protein localises to the cytoplasm. The catalysed reaction is 1-(5-phospho-beta-D-ribosyl)-5'-AMP + H2O = 1-(5-phospho-beta-D-ribosyl)-5-[(5-phospho-beta-D-ribosylamino)methylideneamino]imidazole-4-carboxamide. Its pathway is amino-acid biosynthesis; L-histidine biosynthesis; L-histidine from 5-phospho-alpha-D-ribose 1-diphosphate: step 3/9. Its function is as follows. Catalyzes the hydrolysis of the adenine ring of phosphoribosyl-AMP. This chain is Phosphoribosyl-AMP cyclohydrolase, found in Janthinobacterium sp. (strain Marseille) (Minibacterium massiliensis).